A 186-amino-acid chain; its full sequence is Threonylcarbamoyl-AMP synthase (186 aa).

Positions 3 to 186 (ILSLSECVDR…IINGSLIRHG (184 aa)) constitute a YrdC-like domain.

Belongs to the SUA5 family. TsaC subfamily.

It is found in the cytoplasm. It carries out the reaction L-threonine + hydrogencarbonate + ATP = L-threonylcarbamoyladenylate + diphosphate + H2O. In terms of biological role, required for the formation of a threonylcarbamoyl group on adenosine at position 37 (t(6)A37) in tRNAs that read codons beginning with adenine. Catalyzes the conversion of L-threonine, HCO(3)(-)/CO(2) and ATP to give threonylcarbamoyl-AMP (TC-AMP) as the acyladenylate intermediate, with the release of diphosphate. This is Threonylcarbamoyl-AMP synthase from Buchnera aphidicola subsp. Baizongia pistaciae (strain Bp).